The following is a 199-amino-acid chain: MKKIALFGGSFDPPHYGHFALCTLTRELFSPEKIILSISKNPLKGSANAPEAHQLAMAKLMAEELGKTGPVFEVSDWELRRAGFSYTIETLRHFHAIEPNAELLLCIGEDNYQIFEKWKAYQEILQLAHLVVFARSGTQGEQQSSRIIPPERYTWVQLDLPLSSSDLRREIAEGQDWQAKMPSSIAAHIAAHRLYQNEK.

The protein belongs to the NadD family.

The catalysed reaction is nicotinate beta-D-ribonucleotide + ATP + H(+) = deamido-NAD(+) + diphosphate. It functions in the pathway cofactor biosynthesis; NAD(+) biosynthesis; deamido-NAD(+) from nicotinate D-ribonucleotide: step 1/1. In terms of biological role, catalyzes the reversible adenylation of nicotinate mononucleotide (NaMN) to nicotinic acid adenine dinucleotide (NaAD). This Chloroherpeton thalassium (strain ATCC 35110 / GB-78) protein is Probable nicotinate-nucleotide adenylyltransferase.